Here is a 41-residue protein sequence, read N- to C-terminus: Large ribosomal subunit protein bL36 (41 aa).

It belongs to the bacterial ribosomal protein bL36 family.

This is Large ribosomal subunit protein bL36 from Rhodopseudomonas palustris (strain BisB5).